A 92-amino-acid chain; its full sequence is Small ribosomal subunit protein bS20 (92 aa).

The disordered stretch occupies residues 1 to 23; the sequence is MANTTSAKKATRKIARRTDVNKA.

The protein belongs to the bacterial ribosomal protein bS20 family.

Functionally, binds directly to 16S ribosomal RNA. The protein is Small ribosomal subunit protein bS20 of Rhizobium etli (strain CIAT 652).